The chain runs to 122 residues: Large ribosomal subunit protein bL19 (122 aa).

It belongs to the bacterial ribosomal protein bL19 family.

In terms of biological role, this protein is located at the 30S-50S ribosomal subunit interface and may play a role in the structure and function of the aminoacyl-tRNA binding site. The chain is Large ribosomal subunit protein bL19 (rplS) from Synechocystis sp. (strain ATCC 27184 / PCC 6803 / Kazusa).